The sequence spans 183 residues: Dual-action ribosomal maturation protein DarP (183 aa).

The protein belongs to the DarP family.

It is found in the cytoplasm. Member of a network of 50S ribosomal subunit biogenesis factors which assembles along the 30S-50S interface, preventing incorrect 23S rRNA structures from forming. Promotes peptidyl transferase center (PTC) maturation. In Shigella boydii serotype 18 (strain CDC 3083-94 / BS512), this protein is Dual-action ribosomal maturation protein DarP.